We begin with the raw amino-acid sequence, 215 residues long: FGFR1 oncogene partner 2 homolog (215 aa).

A coiled-coil region spans residues 12 to 186 (AKELVERLRE…REILQITKIS (175 aa)). The segment at 193–215 (EDASENSPHSAPVPNTDLILRKS) is disordered.

Belongs to the SIKE family.

The protein resides in the cytoplasm. The sequence is that of FGFR1 oncogene partner 2 homolog (fgfr1op2) from Xenopus laevis (African clawed frog).